Here is a 435-residue protein sequence, read N- to C-terminus: Mitochondrial distribution and morphology protein 12 (435 aa).

Positions 1–435 (MSIEVDWGAA…VYPSFWTFLV (435 aa)) constitute an SMP-LTD domain. Disordered regions lie at residues 73-113 (DEDD…AINH) and 186-268 (WNDS…TSEE). The span at 96–113 (THPELNESSFRDDNAINH) shows a compositional bias: basic and acidic residues. Low complexity predominate over residues 218-238 (SSNPTSRPSTSSTLPSHPSGS). The segment covering 251 to 268 (HGSHPEEHGHLDDPTSEE) has biased composition (basic and acidic residues).

This sequence belongs to the MDM12 family. In terms of assembly, component of the ER-mitochondria encounter structure (ERMES) or MDM complex, composed of mmm1, mdm10, mdm12 and mdm34. A mmm1 homodimer associates with one molecule of mdm12 on each side in a pairwise head-to-tail manner, and the SMP-LTD domains of mmm1 and mdm12 generate a continuous hydrophobic tunnel for phospholipid trafficking.

The protein localises to the mitochondrion outer membrane. Its subcellular location is the endoplasmic reticulum membrane. Its function is as follows. Component of the ERMES/MDM complex, which serves as a molecular tether to connect the endoplasmic reticulum (ER) and mitochondria. Components of this complex are involved in the control of mitochondrial shape and protein biogenesis, and function in nonvesicular lipid trafficking between the ER and mitochondria. Mdm12 is required for the interaction of the ER-resident membrane protein mmm1 and the outer mitochondrial membrane-resident beta-barrel protein mdm10. The mdm12-mmm1 subcomplex functions in the major beta-barrel assembly pathway that is responsible for biogenesis of all mitochondrial outer membrane beta-barrel proteins, and acts in a late step after the SAM complex. The mdm10-mdm12-mmm1 subcomplex further acts in the TOM40-specific pathway after the action of the mdm12-mmm1 complex. Essential for establishing and maintaining the structure of mitochondria and maintenance of mtDNA nucleoids. The protein is Mitochondrial distribution and morphology protein 12 of Aspergillus niger (strain ATCC MYA-4892 / CBS 513.88 / FGSC A1513).